A 345-amino-acid chain; its full sequence is 3-dehydroquinate synthase (345 aa).

It belongs to the archaeal-type DHQ synthase family.

The enzyme catalyses 2-amino-2,3,7-trideoxy-D-lyxo-hept-6-ulosonate + NAD(+) + H2O = 3-dehydroquinate + NH4(+) + NADH + H(+). Catalyzes the oxidative deamination and cyclization of 2-amino-3,7-dideoxy-D-threo-hept-6-ulosonic acid (ADH) to yield 3-dehydroquinate (DHQ), which is fed into the canonical shikimic pathway of aromatic amino acid biosynthesis. This Methanocorpusculum labreanum (strain ATCC 43576 / DSM 4855 / Z) protein is 3-dehydroquinate synthase.